A 95-amino-acid chain; its full sequence is Protein TusB (95 aa).

This sequence belongs to the DsrH/TusB family. Heterohexamer, formed by a dimer of trimers. The hexameric TusBCD complex contains 2 copies each of TusB, TusC and TusD. The TusBCD complex interacts with TusE.

Its subcellular location is the cytoplasm. Part of a sulfur-relay system required for 2-thiolation of 5-methylaminomethyl-2-thiouridine (mnm(5)s(2)U) at tRNA wobble positions. The chain is Protein TusB from Escherichia coli O45:K1 (strain S88 / ExPEC).